Here is a 485-residue protein sequence, read N- to C-terminus: Ulvan lyase (485 aa).

An N-terminal signal peptide occupies residues 1-33; that stretch reads MIRNDTMLKGQFVLKKTQIALSAALMGSVLLTG. A lipid anchor (N-palmitoyl cysteine) is attached at cysteine 34. Residue cysteine 34 is the site of S-diacylglycerol cysteine attachment. Substrate contacts are provided by asparagine 64 and asparagine 126. The tract at residues 108–128 is disordered; that stretch reads FKAGTSELGRRDGGKKFDNHG. Positions 115 to 128 are enriched in basic and acidic residues; it reads LGRRDGGKKFDNHG. Residue histidine 127 is the Proton donor of the active site. Residues lysine 129 and histidine 147 each contribute to the substrate site. Residue tyrosine 192 is the Proton acceptor of the active site. Arginine 208, histidine 212, and tyrosine 250 together coordinate substrate. Histidine 212 contributes to the Zn(2+) binding site. Zn(2+) contacts are provided by histidine 268, cysteine 270, and histidine 282. Histidine 282 contacts substrate.

It belongs to the polysaccharide lyase 25 family.

The protein localises to the cell membrane. In terms of biological role, ulvan lyase involved in ulvan degradation. Ulvan is the main polysaccharide component of the Ulvales (green seaweed) cell wall. It is composed of disaccharide building blocks comprising 3-sulfated rhamnose (Rha3S) linked to D-glucuronic acid (GlcA), L-iduronic acid (IduA), or D-xylose (Xyl). Ulvan lyase catalyzes the endolytic cleavage of the glycosidic bond between Rha3S and the uronic acids GlcA or IduA, producing oligosaccharides that have unsaturated 4-deoxy-L-threo-hex-4-enopyranosiduronic acid (deltaUA) at the non-reducing end. This results eventually in the degradation of the ulvan polysaccharide into deltaUA-Rha3S disaccharides and deltaUA-Rha3S-Xyl-Rha3S tetrasaccharides. In Alteromonas sp. (strain LOR), this protein is Ulvan lyase.